A 178-amino-acid polypeptide reads, in one-letter code: Crossover junction endodeoxyribonuclease RuvC (178 aa).

Catalysis depends on residues aspartate 8, glutamate 72, and aspartate 144. Mg(2+) contacts are provided by aspartate 8, glutamate 72, and aspartate 144.

It belongs to the RuvC family. In terms of assembly, homodimer which binds Holliday junction (HJ) DNA. The HJ becomes 2-fold symmetrical on binding to RuvC with unstacked arms; it has a different conformation from HJ DNA in complex with RuvA. In the full resolvosome a probable DNA-RuvA(4)-RuvB(12)-RuvC(2) complex forms which resolves the HJ. Requires Mg(2+) as cofactor.

Its subcellular location is the cytoplasm. The catalysed reaction is Endonucleolytic cleavage at a junction such as a reciprocal single-stranded crossover between two homologous DNA duplexes (Holliday junction).. In terms of biological role, the RuvA-RuvB-RuvC complex processes Holliday junction (HJ) DNA during genetic recombination and DNA repair. Endonuclease that resolves HJ intermediates. Cleaves cruciform DNA by making single-stranded nicks across the HJ at symmetrical positions within the homologous arms, yielding a 5'-phosphate and a 3'-hydroxyl group; requires a central core of homology in the junction. The consensus cleavage sequence is 5'-(A/T)TT(C/G)-3'. Cleavage occurs on the 3'-side of the TT dinucleotide at the point of strand exchange. HJ branch migration catalyzed by RuvA-RuvB allows RuvC to scan DNA until it finds its consensus sequence, where it cleaves and resolves the cruciform DNA. This is Crossover junction endodeoxyribonuclease RuvC from Idiomarina loihiensis (strain ATCC BAA-735 / DSM 15497 / L2-TR).